A 218-amino-acid polypeptide reads, in one-letter code: Probable nicotinate-nucleotide adenylyltransferase (218 aa).

Belongs to the NadD family.

It catalyses the reaction nicotinate beta-D-ribonucleotide + ATP + H(+) = deamido-NAD(+) + diphosphate. It functions in the pathway cofactor biosynthesis; NAD(+) biosynthesis; deamido-NAD(+) from nicotinate D-ribonucleotide: step 1/1. Its function is as follows. Catalyzes the reversible adenylation of nicotinate mononucleotide (NaMN) to nicotinic acid adenine dinucleotide (NaAD). In Burkholderia lata (strain ATCC 17760 / DSM 23089 / LMG 22485 / NCIMB 9086 / R18194 / 383), this protein is Probable nicotinate-nucleotide adenylyltransferase.